The sequence spans 621 residues: Chaperone protein HscA homolog (621 aa).

Belongs to the heat shock protein 70 family.

In terms of biological role, chaperone involved in the maturation of iron-sulfur cluster-containing proteins. Has a low intrinsic ATPase activity which is markedly stimulated by HscB. The chain is Chaperone protein HscA homolog from Ralstonia pickettii (strain 12J).